A 339-amino-acid chain; its full sequence is Intelectin-1 (339 aa).

Residues 1–18 (MLSYSLLLLALAFPAGHA) form the signal peptide. The region spanning 58–108 (GDMNYGYRSCNEIKSSDSRAPDGIYTLATEDGESYQTFCDMTTNGGGWTLV) is the Fibrinogen C-terminal domain. Cysteines 67 and 96 form a disulfide. Residues His-112, Glu-113, Asn-115, Gly-118, Gly-123, Asp-124, and Asp-159 each contribute to the Ca(2+) site. 3 cysteine pairs are disulfide-bonded: Cys-120–Cys-306, Cys-225–Cys-285, and Cys-277–Cys-291. N-linked (GlcNAc...) asparagine glycosylation occurs at Asn-189. The Ca(2+) site is built by Asn-286, Glu-288, Glu-300, and Asp-308. Residues 288-289 (EH) and Glu-300 each bind a carbohydrate.

As to quaternary structure, homotrimer; disulfide-linked. Homohexamer; disulfide-linked. Forms primarily homotrimers in solution, but can also form homohexamers. Post-translationally, N-glycosylated.

The protein localises to the secreted. It is found in the cytoplasmic vesicle. The protein resides in the secretory vesicle. Functionally, lectin that specifically recognizes microbial carbohydrate chains in a calcium-dependent manner. Binds to microbial glycans that contain a terminal acyclic 1,2-diol moiety, including beta-linked D-galactofuranose (beta-Galf) and D-phosphoglycerol-modified glycans. Binds to S.pneumoniae serotypes with glycans that contain beta-linked D-galactofuranose (beta-Galf) and with D-phosphoglycerol-modified glycans. Can bind a variety of monosaccharides (in vitro). Probably plays a role in the defense system against microorganisms. This chain is Intelectin-1 (itln1), found in Xenopus laevis (African clawed frog).